The primary structure comprises 485 residues: Adenylate kinase 8 (485 aa).

Adenylate kinase stretches follow at residues 58–258 (PRVF…TFVL) and 269–471 (PRIL…SYIV). Residue 67–72 (ASGKHT) coordinates ATP. An NMP 1 region spans residues 87 to 113 (TPENVLSSDVSLLVKEAQSYRDKGQEV). AMP contacts are provided by residues 140–143 (GFPK) and Gln-147. An LID 1 region spans residues 177–206 (GKRIDITDGEVYHTTFDWPSDPAVQRNLVE). Residue Arg-218 coordinates AMP. 278 to 283 (GSGRSL) lines the ATP pocket. Positions 298-327 (CCGQVLKEAVADQTKLGELIQPYIENDQQV) are NMP 2. AMP contacts are provided by residues 325–327 (QQV), 354–357 (GFPQ), and Gln-361. The LID 2 stretch occupies residues 391–424 (LCMTDPVSGERYHSIYKPAPRSEVQERLQQNPKY). Arg-432 lines the AMP pocket.

This sequence belongs to the adenylate kinase family.

It is found in the cytoplasm. Its subcellular location is the cytosol. It carries out the reaction AMP + ATP = 2 ADP. It catalyses the reaction a 2'-deoxyribonucleoside 5'-diphosphate + ATP = a 2'-deoxyribonucleoside 5'-triphosphate + ADP. The enzyme catalyses a ribonucleoside 5'-diphosphate + ATP = a ribonucleoside 5'-triphosphate + ADP. Nucleoside monophosphate (NMP) kinase that catalyzes the reversible transfer of the terminal phosphate group between nucleoside triphosphates and monophosphates. Has highest activity toward AMP, and weaker activity toward dAMP, CMP and dCMP. Also displays broad nucleoside diphosphate kinase activity. The sequence is that of Adenylate kinase 8 (ak8) from Xenopus laevis (African clawed frog).